A 145-amino-acid polypeptide reads, in one-letter code: Neuropeptide-like protein 68 (145 aa).

Positions 1–15 (MLLVLLFSLFSVGFG) are cleaved as a signal peptide. The interval 41-65 (SSSSEDDTPDFPSLRDKRGVDPMSI) is disordered.

The protein resides in the secreted. This Caenorhabditis elegans protein is Neuropeptide-like protein 68.